Reading from the N-terminus, the 397-residue chain is uncharacterized protein (397 aa).

This is an uncharacterized protein from Methanocaldococcus jannaschii (strain ATCC 43067 / DSM 2661 / JAL-1 / JCM 10045 / NBRC 100440) (Methanococcus jannaschii).